We begin with the raw amino-acid sequence, 222 residues long: Ras-related protein Rab11D (222 aa).

Residue 22-29 (GDSAVGKS) coordinates GTP. The Effector region signature appears at 44–52 (SKATIGVEF). GTP-binding positions include 70 to 74 (DTAGQ) and 128 to 131 (NKTD). Residues cysteine 219 and cysteine 220 are each lipidated (S-geranylgeranyl cysteine).

Belongs to the small GTPase superfamily. Rab family.

It localises to the cell membrane. In Nicotiana tabacum (Common tobacco), this protein is Ras-related protein Rab11D (RAB11D).